Reading from the N-terminus, the 771-residue chain is UPF0313 protein PSPTO_4928 (771 aa).

The Radical SAM core domain occupies 371–649 (AYDMIRFSVN…KAFLRYHDPK (279 aa)). Cys385, Cys389, and Cys392 together coordinate [4Fe-4S] cluster. The tract at residues 683 to 771 (DTYQSARRKN…KPARKPVVPR (89 aa)) is disordered. Composition is skewed to basic and acidic residues over residues 726-735 (KPWDKREEAK) and 745-754 (AAKERMDAAK). The span at 756 to 765 (GKGKGGKPAR) shows a compositional bias: basic residues.

It belongs to the UPF0313 family. Requires [4Fe-4S] cluster as cofactor.

This Pseudomonas syringae pv. tomato (strain ATCC BAA-871 / DC3000) protein is UPF0313 protein PSPTO_4928.